The primary structure comprises 92 residues: uncharacterized protein (92 aa).

3 consecutive transmembrane segments (helical) span residues 1–21, 30–50, and 62–82; these read MNIY…LVGL, ANVL…IVVI, and IALA…KVIG.

To M.thermoautotrophicum MTH1250.

The protein localises to the cell membrane. This is an uncharacterized protein from Methanocaldococcus jannaschii (strain ATCC 43067 / DSM 2661 / JAL-1 / JCM 10045 / NBRC 100440) (Methanococcus jannaschii).